Reading from the N-terminus, the 397-residue chain is Elongation factor Tu (397 aa).

Residues 10–206 (KPHVNIGTIG…AVDSYIPTPE (197 aa)) enclose the tr-type G domain. The G1 stretch occupies residues 19 to 26 (GHVDHGKT). Residue 19 to 26 (GHVDHGKT) participates in GTP binding. A Mg(2+)-binding site is contributed by threonine 26. Residues 60-64 (GITIN) form a G2 region. The tract at residues 81-84 (DCPG) is G3. Residues 81–85 (DCPGH) and 136–139 (NKAD) contribute to the GTP site. Residues 136–139 (NKAD) form a G4 region. Residues 174–176 (SAL) form a G5 region.

Belongs to the TRAFAC class translation factor GTPase superfamily. Classic translation factor GTPase family. EF-Tu/EF-1A subfamily. Monomer.

The protein localises to the cytoplasm. The catalysed reaction is GTP + H2O = GDP + phosphate + H(+). Its function is as follows. GTP hydrolase that promotes the GTP-dependent binding of aminoacyl-tRNA to the A-site of ribosomes during protein biosynthesis. The chain is Elongation factor Tu from Clostridium perfringens (strain ATCC 13124 / DSM 756 / JCM 1290 / NCIMB 6125 / NCTC 8237 / Type A).